Reading from the N-terminus, the 488-residue chain is MEKSWFNFMFSKGELEYRGELSKAMDSFAPGEKTTISQDRFIYDMDKNFYGWDERSSYSSSYSNNVDLLVSSKDIRNFISDDTFFVRDSNKNSYSIFFDKKKKIFEIDNDFSDLEKFFYSYCSSSYLNNRSKGDNDLHYDPYIKDTKYNCTNHINSCIDSYFRSYICIDNNFLIDSNNFNESYIYNFICSESGKIRESKNYKIRTNRNRSNLISSKDFDITQNYNQLWIQCDNCYGLMYKKVKMNVCEQCGHYLKMSSSERIELLIDPGTWNPMDEDMVSADPIKFHSKEEPYKNRIDSAQKTTGLTDAVQTGTGQLNGIPVALGVMDFRFMGGSMGSVVGEKITRLIEYATNQCLPLILVCSSGGARMQEGSLSLMQMAKISSVLCDYQSSKKLFYISILTSPTTGGVTASFGMLGDIIIAEPYAYIAFAGKRVIEQTLKKAVPEGSQAAESLLRKGLLDAIVPRNLLKGVLSELFQLHAFFPLNTN.

The CoA carboxyltransferase N-terminal domain occupies 227–488 (LWIQCDNCYG…LHAFFPLNTN (262 aa)). Cys231, Cys234, Cys247, and Cys250 together coordinate Zn(2+). The segment at 231 to 250 (CDNCYGLMYKKVKMNVCEQC) adopts a C4-type zinc-finger fold.

This sequence belongs to the AccD/PCCB family. Acetyl-CoA carboxylase is a heterohexamer composed of biotin carboxyl carrier protein, biotin carboxylase and 2 subunits each of ACCase subunit alpha and ACCase plastid-coded subunit beta (accD). The cofactor is Zn(2+). As to expression, accumulates in fatty acids synthesizing tissues such as embryos, expanding leaves, flower buds, flowers, and developing siliques.

Its subcellular location is the plastid. The protein localises to the chloroplast membrane. It localises to the chloroplast stroma. The enzyme catalyses N(6)-carboxybiotinyl-L-lysyl-[protein] + acetyl-CoA = N(6)-biotinyl-L-lysyl-[protein] + malonyl-CoA. It participates in lipid metabolism; malonyl-CoA biosynthesis; malonyl-CoA from acetyl-CoA: step 1/1. Component of the acetyl coenzyme A carboxylase (ACC) complex. Biotin carboxylase (BC) catalyzes the carboxylation of biotin on its carrier protein (BCCP) and then the CO(2) group is transferred by the transcarboxylase to acetyl-CoA to form malonyl-CoA. The sequence is that of Acetyl-coenzyme A carboxylase carboxyl transferase subunit beta, chloroplastic from Arabidopsis thaliana (Mouse-ear cress).